We begin with the raw amino-acid sequence, 340 residues long: DNA-directed RNA polymerase subunit alpha (340 aa).

The interval 1 to 236 is alpha N-terminal domain (alpha-NTD); that stretch reads MLSLSKNWNT…EQLQLFIAFE (236 aa). Positions 251-340 are alpha C-terminal domain (alpha-CTD); it reads FSPYLLKRVD…LSKRYEDSYN (90 aa).

Belongs to the RNA polymerase alpha chain family. As to quaternary structure, homodimer. The RNAP catalytic core consists of 2 alpha, 1 beta, 1 beta' and 1 omega subunit. When a sigma factor is associated with the core the holoenzyme is formed, which can initiate transcription.

The catalysed reaction is RNA(n) + a ribonucleoside 5'-triphosphate = RNA(n+1) + diphosphate. Functionally, DNA-dependent RNA polymerase catalyzes the transcription of DNA into RNA using the four ribonucleoside triphosphates as substrates. The protein is DNA-directed RNA polymerase subunit alpha of Rickettsia prowazekii (strain Madrid E).